Consider the following 149-residue polypeptide: Transcriptional repressor NrdR (149 aa).

A zinc finger lies at 3–34 (CPFCSAVDTKVIDSRLVAEGHQVRRRRECLLC). One can recognise an ATP-cone domain in the interval 49–139 (PRVIKSNGSR…VYRSFEDIRE (91 aa)).

The protein belongs to the NrdR family. It depends on Zn(2+) as a cofactor.

Negatively regulates transcription of bacterial ribonucleotide reductase nrd genes and operons by binding to NrdR-boxes. The protein is Transcriptional repressor NrdR of Aeromonas hydrophila subsp. hydrophila (strain ATCC 7966 / DSM 30187 / BCRC 13018 / CCUG 14551 / JCM 1027 / KCTC 2358 / NCIMB 9240 / NCTC 8049).